The chain runs to 333 residues: Ribosomal RNA small subunit methyltransferase C (333 aa).

Belongs to the methyltransferase superfamily. RsmC family. As to quaternary structure, monomer.

The protein resides in the cytoplasm. It carries out the reaction guanosine(1207) in 16S rRNA + S-adenosyl-L-methionine = N(2)-methylguanosine(1207) in 16S rRNA + S-adenosyl-L-homocysteine + H(+). Specifically methylates the guanine in position 1207 of 16S rRNA in the 30S particle. The polypeptide is Ribosomal RNA small subunit methyltransferase C (Actinobacillus succinogenes (strain ATCC 55618 / DSM 22257 / CCUG 43843 / 130Z)).